A 392-amino-acid polypeptide reads, in one-letter code: S-adenosylmethionine decarboxylase proenzyme (392 aa).

Residues glutamate 43 and glutamate 46 contribute to the active site. The active-site Schiff-base intermediate with substrate; via pyruvic acid is the serine 100. Serine 100 is subject to Pyruvic acid (Ser); by autocatalysis. The Proton donor; for catalytic activity role is filled by cysteine 114. Active-site proton acceptor; for processing activity residues include serine 264 and histidine 277.

The protein belongs to the eukaryotic AdoMetDC family. Pyruvate is required as a cofactor. Is synthesized initially as an inactive proenzyme. Formation of the active enzyme involves a self-maturation process in which the active site pyruvoyl group is generated from an internal serine residue via an autocatalytic post-translational modification. Two non-identical subunits are generated from the proenzyme in this reaction, and the pyruvate is formed at the N-terminus of the alpha chain, which is derived from the carboxyl end of the proenzyme. The post-translation cleavage follows an unusual pathway, termed non-hydrolytic serinolysis, in which the side chain hydroxyl group of the serine supplies its oxygen atom to form the C-terminus of the beta chain, while the remainder of the serine residue undergoes an oxidative deamination to produce ammonia and the pyruvoyl group blocking the N-terminus of the alpha chain.

It carries out the reaction S-adenosyl-L-methionine + H(+) = S-adenosyl 3-(methylsulfanyl)propylamine + CO2. Its pathway is amine and polyamine biosynthesis; S-adenosylmethioninamine biosynthesis; S-adenosylmethioninamine from S-adenosyl-L-methionine: step 1/1. The chain is S-adenosylmethionine decarboxylase proenzyme from Leishmania infantum.